The following is a 597-amino-acid chain: Elongation factor 4 (597 aa).

A tr-type G domain is found at Lys-2 to Thr-184. Residues Asp-14–Thr-19 and Asn-131–Asp-134 each bind GTP.

It belongs to the TRAFAC class translation factor GTPase superfamily. Classic translation factor GTPase family. LepA subfamily.

It localises to the cell inner membrane. It carries out the reaction GTP + H2O = GDP + phosphate + H(+). In terms of biological role, required for accurate and efficient protein synthesis under certain stress conditions. May act as a fidelity factor of the translation reaction, by catalyzing a one-codon backward translocation of tRNAs on improperly translocated ribosomes. Back-translocation proceeds from a post-translocation (POST) complex to a pre-translocation (PRE) complex, thus giving elongation factor G a second chance to translocate the tRNAs correctly. Binds to ribosomes in a GTP-dependent manner. This Neisseria meningitidis serogroup C (strain 053442) protein is Elongation factor 4.